The following is a 372-amino-acid chain: Putative isochorismate synthase MenF (372 aa).

Catalysis depends on lysine 119, which acts as the Proton acceptor. The active-site Proton donor is the glutamate 175. Positions 219 and 356 each coordinate Mg(2+).

Belongs to the isochorismate synthase family. The cofactor is Mg(2+).

The enzyme catalyses chorismate = isochorismate. Its pathway is quinol/quinone metabolism; 1,4-dihydroxy-2-naphthoate biosynthesis; 1,4-dihydroxy-2-naphthoate from chorismate: step 1/7. It functions in the pathway quinol/quinone metabolism; menaquinone biosynthesis. Its function is as follows. Catalyzes the conversion of chorismate to isochorismate. This Mycobacterium tuberculosis (strain CDC 1551 / Oshkosh) protein is Putative isochorismate synthase MenF (menF).